The sequence spans 156 residues: Deoxyuridine 5'-triphosphate nucleotidohydrolase (156 aa).

Substrate-binding positions include 74-76 (RSG), Asn87, 91-93 (TID), and Lys101.

This sequence belongs to the dUTPase family. Requires Mg(2+) as cofactor.

The catalysed reaction is dUTP + H2O = dUMP + diphosphate + H(+). The protein operates within pyrimidine metabolism; dUMP biosynthesis; dUMP from dCTP (dUTP route): step 2/2. In terms of biological role, this enzyme is involved in nucleotide metabolism: it produces dUMP, the immediate precursor of thymidine nucleotides and it decreases the intracellular concentration of dUTP so that uracil cannot be incorporated into DNA. This is Deoxyuridine 5'-triphosphate nucleotidohydrolase from Wolbachia sp. subsp. Brugia malayi (strain TRS).